A 436-amino-acid polypeptide reads, in one-letter code: Na(+)/H(+) antiporter NhaA 2 (436 aa).

11 helical membrane-spanning segments follow: residues 35–55 (FGGGLLLLGAVLALLWANSPW), 80–100 (LATWAADGLLAIFFFVVGLEL), 116–136 (ALPVVAAIGGMIVPALIYVGI), 147–167 (GWAIPTATDIAFALAVLAVIG), 176–196 (AFLLTLAVVDDLLAITVIAIF), 201–221 (FKLTPLLVALLPIALFGLLVQ), 226–246 (WWWALIPLAVVAWTLVHESGV), 283–303 (VSAGFAVPVFAFFAAGVSLRG), 313–333 (PIVVGIVAGLVLGKVLGIFGS), 354–374 (LLGVSLLAGIGFTVSLLIGEL), and 385–405 (VKAAVLTGSVIAALLASAVLS).

It belongs to the NhaA Na(+)/H(+) (TC 2.A.33) antiporter family.

The protein resides in the cell membrane. The enzyme catalyses Na(+)(in) + 2 H(+)(out) = Na(+)(out) + 2 H(+)(in). Functionally, na(+)/H(+) antiporter that extrudes sodium in exchange for external protons. The protein is Na(+)/H(+) antiporter NhaA 2 of Salinispora arenicola (strain CNS-205).